The sequence spans 196 residues: Carnitine operon protein CaiE (196 aa).

Residues T173–R196 form a disordered region. Positions Q187 to R196 are enriched in polar residues.

The protein belongs to the transferase hexapeptide repeat family.

The protein operates within amine and polyamine metabolism; carnitine metabolism. Functionally, overproduction of CaiE stimulates the activity of CaiB and CaiD. This is Carnitine operon protein CaiE from Escherichia coli O7:K1 (strain IAI39 / ExPEC).